Consider the following 230-residue polypeptide: MKTLSAGLLALASAASAHYTFPSLIANGVVTGEWEYVRQTENHYSNAPVTDVSSEAIRCYENPGRPAAKTLSVAAGSTVGFTVSPSIYHPGPLQFYMARVPDGQTADSWDGSGQVWFKIFEQGPQIDPSGLTWPSDGLSQVQVTIPSSLPSGDYLLRVEQIGLHSASSVNGAQFYLSCAQLTVTGGGNGNPGPLVSFPGAYSPTDPGLLINIYWPIPTSYELPGPPVWRG.

A signal peptide spans Met1–Ala17. Residues His18 and His89 each contribute to the Cu(2+) site. Residues Cys59 and Cys178 are joined by a disulfide bond. Positions 164 and 173 each coordinate O2. Residue Tyr175 coordinates Cu(2+).

This sequence belongs to the polysaccharide monooxygenase AA9 family. The cofactor is Cu(2+).

The protein localises to the secreted. It catalyses the reaction [(1-&gt;4)-beta-D-glucosyl]n+m + reduced acceptor + O2 = 4-dehydro-beta-D-glucosyl-[(1-&gt;4)-beta-D-glucosyl]n-1 + [(1-&gt;4)-beta-D-glucosyl]m + acceptor + H2O.. Its function is as follows. Lytic polysaccharide monooxygenase (LPMO) that depolymerizes crystalline and amorphous polysaccharides via the oxidation of scissile alpha- or beta-(1-4)-glycosidic bonds, yielding primarly C1 oxidation products. Catalysis by LPMOs requires the reduction of the active-site copper from Cu(II) to Cu(I) by a reducing agent and H(2)O(2) or O(2) as a cosubstrate. Active on hemicelluloses, including xylan, glucomannan, and xyloglucan. Preferentially cleaves residual xylan in phosphoric acid-swollen cellulose (PASC). Moreover, when exposed to cellulose-xylan blends, shows a preference for xylan and for releasing oxidized xylooligosaccharides. Has no activity on ivory nut mannan (INM), a linear beta-1,4-linked mannan without substitutions. In Malbranchea cinnamomea (Thermophilic fungus), this protein is AA9 family lytic polysaccharide monooxygenase H.